Here is a 490-residue protein sequence, read N- to C-terminus: Metal cation symporter ZIP14 (490 aa).

The N-terminal stretch at 1 to 28 is a signal peptide; sequence MKLLHPAFQSCLLLTLLGLWRTTPEAHA. Residues 29-155 are Extracellular-facing; the sequence is SSPGAPAISA…PSAVEVWGYG (127 aa). N-linked (GlcNAc...) asparagine glycans are attached at residues asparagine 75, asparagine 85, and asparagine 100. The chain crosses the membrane as a helical span at residues 156–176; that stretch reads LLCVTVISLCSLLGASVVPFM. The Cytoplasmic portion of the chain corresponds to 177–184; the sequence is KKTFYKRL. A helical transmembrane segment spans residues 185–205; that stretch reads LLYFIALAIGTLYSNALFQLI. Residues 206 to 222 lie on the Extracellular side of the membrane; the sequence is PEAFGFNPLEDYYVSKS. The chain crosses the membrane as a helical span at residues 223 to 243; the sequence is AVVFGGFYLFFFTEKILKILL. Topologically, residues 244–395 are cytoplasmic; it reads KQKNEHHHGH…LLNAGMSIQQ (152 aa). Positions 249-256 match the HHHGHXHX-motif motif; it reads HHHGHSHY. An XEXPHE-motif motif is present at residues 374–379; the sequence is EEFPHE. A helical membrane pass occupies residues 396-416; that stretch reads ALFFNFLSACCCYLGLAFGIL. At 417–422 the chain is on the extracellular side; that stretch reads AGSHFS. A helical membrane pass occupies residues 423–443; sequence ANWIFALAGGMFLYISLADMF. The Cytoplasmic segment spans residues 444 to 458; it reads PEMNEVCQEDERKGS. Residues 459–479 form a helical membrane-spanning segment; that stretch reads ILIPFVIQNLGLLTGFTIMVV. At 480–490 the chain is on the extracellular side; it reads LTMYSGQIQIG.

Belongs to the ZIP transporter (TC 2.A.5) family. Homotrimer. Post-translationally, ubiquitinated. Ubiquitination occurs upon iron depletion. The ubiquitinated form undergoes proteasomal degradation. In terms of processing, N-glycosylated. N-glycosylation at Asn-100 is required for iron-regulated extraction of the transporter from membranes and subsequent proteasomal degradation.

The protein localises to the cell membrane. It localises to the apical cell membrane. The protein resides in the basolateral cell membrane. It is found in the early endosome membrane. Its subcellular location is the late endosome membrane. The protein localises to the lysosome membrane. It carries out the reaction Zn(2+)(out) + 2 hydrogencarbonate(out) = Zn(2+)(in) + 2 hydrogencarbonate(in). The enzyme catalyses Mn(2+)(out) + 2 hydrogencarbonate(out) = Mn(2+)(in) + 2 hydrogencarbonate(in). It catalyses the reaction Fe(2+)(out) + 2 hydrogencarbonate(out) = Fe(2+)(in) + 2 hydrogencarbonate(in). The catalysed reaction is Cd(2+)(out) + 2 hydrogencarbonate(out) = Cd(2+)(in) + 2 hydrogencarbonate(in). Its function is as follows. Electroneutral transporter of the plasma membrane mediating the cellular uptake of the divalent metal cations zinc, manganese and iron that are important for tissue homeostasis, metabolism, development and immunity. Functions as an energy-dependent symporter, transporting through the membranes an electroneutral complex composed of a divalent metal cation and two bicarbonate anions. Beside these endogenous cellular substrates, can also import cadmium a non-essential metal which is cytotoxic and carcinogenic. Controls the cellular uptake by the intestinal epithelium of systemic zinc, which is in turn required to maintain tight junctions and the intestinal permeability. Modifies the activity of zinc-dependent phosphodiesterases, thereby indirectly regulating G protein-coupled receptor signaling pathways important for gluconeogenesis and chondrocyte differentiation. Regulates insulin receptor signaling, glucose uptake, glycogen synthesis and gluconeogenesis in hepatocytes through the zinc-dependent intracellular catabolism of insulin. Through zinc cellular uptake also plays a role in the adaptation of cells to endoplasmic reticulum stress. Major manganese transporter of the basolateral membrane of intestinal epithelial cells, it plays a central role in manganese systemic homeostasis through intestinal manganese uptake. Also involved in manganese extracellular uptake by cells of the blood-brain barrier. May also play a role in manganese and zinc homeostasis participating in their elimination from the blood through the hepatobiliary excretion. Also functions in the extracellular uptake of free iron. May also function intracellularly and mediate the transport from endosomes to cytosol of iron endocytosed by transferrin. Plays a role in innate immunity by regulating the expression of cytokines by activated macrophages. The chain is Metal cation symporter ZIP14 from Pongo abelii (Sumatran orangutan).